Consider the following 421-residue polypeptide: CinA-like protein (421 aa).

The protein belongs to the CinA family.

This is CinA-like protein from Synechococcus elongatus (strain ATCC 33912 / PCC 7942 / FACHB-805) (Anacystis nidulans R2).